We begin with the raw amino-acid sequence, 411 residues long: Exodeoxyribonuclease 7 large subunit (411 aa).

Belongs to the XseA family. As to quaternary structure, heterooligomer composed of large and small subunits.

The protein localises to the cytoplasm. The catalysed reaction is Exonucleolytic cleavage in either 5'- to 3'- or 3'- to 5'-direction to yield nucleoside 5'-phosphates.. Bidirectionally degrades single-stranded DNA into large acid-insoluble oligonucleotides, which are then degraded further into small acid-soluble oligonucleotides. This chain is Exodeoxyribonuclease 7 large subunit, found in Mycobacterium sp. (strain JLS).